The chain runs to 474 residues: Cytochrome c biogenesis protein CcsB (474 aa).

Helical transmembrane passes span 36–56 (LKLA…GTVI), 96–116 (SWWF…CTFR), and 182–202 (VGPI…MIGA).

It belongs to the Ccs1/CcsB family. May interact with CcsA.

The protein resides in the cell inner membrane. Functionally, required during biogenesis of c-type cytochromes (cytochrome c6 and cytochrome f) at the step of heme attachment. This Gloeobacter violaceus (strain ATCC 29082 / PCC 7421) protein is Cytochrome c biogenesis protein CcsB.